We begin with the raw amino-acid sequence, 622 residues long: Putative E3 ubiquitin-protein ligase ORTHRUS 4 (622 aa).

The PHD-type zinc finger occupies 12 to 62 (DGVCMRCQVTPPSEETLTCGTCVTPWHVSCLLPESLASSTGDWECPDCSGV). The RING-type 1 zinc finger occupies 129-169 (CSICIQLPERPVTTPCGHNFCLKCFEKWAVGQGKLTCMICR). Positions 258–407 (TRNQGVLVGE…HKMCRYLFVR (150 aa)) constitute a YDG domain. The RING-type 2 zinc finger occupies 498 to 555 (CQICRKVLSLPVTTPCAHNFCKACLEAKFAGITQLRDRSNGVRKLRAKKNIMTCPCCT). Residues 566-602 (QVNREMMEIIENFKKSEEEAEVAESSNISEEEEEESE) adopt a coiled-coil conformation. The interval 579–622 (KKSEEEAEVAESSNISEEEEEESEPPTKKIKMDNNSVGDTSLSA) is disordered. A compositionally biased stretch (polar residues) spans 611–622 (DNNSVGDTSLSA).

Its subcellular location is the nucleus. It carries out the reaction S-ubiquitinyl-[E2 ubiquitin-conjugating enzyme]-L-cysteine + [acceptor protein]-L-lysine = [E2 ubiquitin-conjugating enzyme]-L-cysteine + N(6)-ubiquitinyl-[acceptor protein]-L-lysine.. The protein operates within protein modification; protein ubiquitination. Functionally, E3 ubiquitin-protein ligase. May participate in CpG methylation-dependent transcriptional regulation. The chain is Putative E3 ubiquitin-protein ligase ORTHRUS 4 (ORTH4) from Arabidopsis thaliana (Mouse-ear cress).